The following is a 321-amino-acid chain: Protein translocase subunit SecF (321 aa).

A run of 6 helical transmembrane segments spans residues 23-43, 158-178, 189-209, 217-237, 258-280, and 290-312; these read VWLI…FSWT, LQTT…YISI, LLAL…LGII, LFAV…VVVF, FAVS…PLIA, and YWFA…ALVP.

The protein belongs to the SecD/SecF family. SecF subfamily. Forms a complex with SecD. Part of the essential Sec protein translocation apparatus which comprises SecA, SecYEG and auxiliary proteins SecDF. Other proteins may also be involved.

It localises to the cell inner membrane. Functionally, part of the Sec protein translocase complex. Interacts with the SecYEG preprotein conducting channel. SecDF uses the proton motive force (PMF) to complete protein translocation after the ATP-dependent function of SecA. In terms of biological role, probably participates in protein translocation into and across both the cytoplasmic and thylakoid membranes in cyanobacterial cells. This is Protein translocase subunit SecF from Prochlorococcus marinus (strain SARG / CCMP1375 / SS120).